Here is a 216-residue protein sequence, read N- to C-terminus: Orotate phosphoribosyltransferase (216 aa).

Lys-30 lines the 5-phospho-alpha-D-ribose 1-diphosphate pocket. Position 38–39 (Phe-38–Phe-39) interacts with orotate. 5-phospho-alpha-D-ribose 1-diphosphate-binding positions include Tyr-75–Lys-76, Arg-102, Lys-103, Lys-106, His-108, and Asp-128–Ala-136. Residues Thr-132 and Arg-160 each contribute to the orotate site.

Belongs to the purine/pyrimidine phosphoribosyltransferase family. PyrE subfamily. Homodimer. Mg(2+) is required as a cofactor.

The catalysed reaction is orotidine 5'-phosphate + diphosphate = orotate + 5-phospho-alpha-D-ribose 1-diphosphate. The protein operates within pyrimidine metabolism; UMP biosynthesis via de novo pathway; UMP from orotate: step 1/2. Functionally, catalyzes the transfer of a ribosyl phosphate group from 5-phosphoribose 1-diphosphate to orotate, leading to the formation of orotidine monophosphate (OMP). This is Orotate phosphoribosyltransferase from Acinetobacter baumannii (strain ACICU).